We begin with the raw amino-acid sequence, 156 residues long: Small ribosomal subunit protein uS7 (156 aa).

It belongs to the universal ribosomal protein uS7 family. Part of the 30S ribosomal subunit. Contacts proteins S9 and S11.

Its function is as follows. One of the primary rRNA binding proteins, it binds directly to 16S rRNA where it nucleates assembly of the head domain of the 30S subunit. Is located at the subunit interface close to the decoding center, probably blocks exit of the E-site tRNA. In Xanthobacter autotrophicus (strain ATCC BAA-1158 / Py2), this protein is Small ribosomal subunit protein uS7.